The following is a 449-amino-acid chain: Putative F-box/LRR-repeat protein 23 (449 aa).

LRR repeat units lie at residues 14–37 (KLWR…HLKL) and 39–64 (GNGL…DLRR). An F-box domain is found at 178–225 (LRNWAELPSKLTSSILLRLGAIEILQNAQKVCKPWHRVCKDPSMWRKI). LRR repeat units lie at residues 261–286 (WYYG…GLVR), 287–311 (CFPI…LEVS), 312–337 (YCLF…KLNR), 344–367 (SNSG…HLQL), 369–394 (GNGL…DLRQ), and 401–427 (VGDL…DSDD).

The sequence is that of Putative F-box/LRR-repeat protein 23 (FBL23) from Arabidopsis thaliana (Mouse-ear cress).